The following is a 232-amino-acid chain: 7-cyano-7-deazaguanine synthase (232 aa).

8-18 provides a ligand contact to ATP; it reads FSGGQDSTTCL. C188, C197, C200, and C203 together coordinate Zn(2+).

This sequence belongs to the QueC family. Requires Zn(2+) as cofactor.

It catalyses the reaction 7-carboxy-7-deazaguanine + NH4(+) + ATP = 7-cyano-7-deazaguanine + ADP + phosphate + H2O + H(+). It participates in purine metabolism; 7-cyano-7-deazaguanine biosynthesis. In terms of biological role, catalyzes the ATP-dependent conversion of 7-carboxy-7-deazaguanine (CDG) to 7-cyano-7-deazaguanine (preQ(0)). This is 7-cyano-7-deazaguanine synthase from Buchnera aphidicola subsp. Schizaphis graminum (strain Sg).